The primary structure comprises 430 residues: Adenylosuccinate synthetase (430 aa).

GTP is bound by residues 13–19 (GDEGKGK) and 41–43 (GHT). Asp-14 acts as the Proton acceptor in catalysis. Asp-14 and Gly-41 together coordinate Mg(2+). Residues 14 to 17 (DEGK), 39 to 42 (NAGH), Thr-130, Arg-144, Gln-225, Thr-240, and Arg-304 each bind IMP. The active-site Proton donor is the His-42. Residue 300–306 (STTGRAR) coordinates substrate. GTP is bound by residues Arg-306, 332–334 (KLD), and 414–416 (STG).

This sequence belongs to the adenylosuccinate synthetase family. As to quaternary structure, homodimer. It depends on Mg(2+) as a cofactor.

It localises to the cytoplasm. The catalysed reaction is IMP + L-aspartate + GTP = N(6)-(1,2-dicarboxyethyl)-AMP + GDP + phosphate + 2 H(+). It participates in purine metabolism; AMP biosynthesis via de novo pathway; AMP from IMP: step 1/2. Plays an important role in the de novo pathway of purine nucleotide biosynthesis. Catalyzes the first committed step in the biosynthesis of AMP from IMP. The protein is Adenylosuccinate synthetase of Pseudomonas putida (strain W619).